The chain runs to 592 residues: Cryptochrome-2 (592 aa).

Residues 21 to 150 (ASSVHWFRKG…EVVTENSHTL (130 aa)) enclose the Photolyase/cryptochrome alpha/beta domain. Lys29 is covalently cross-linked (Glycyl lysine isopeptide (Lys-Gly) (interchain with G-Cter in ubiquitin)). Ser89 carries the post-translational modification Phosphoserine. Residues Lys125 and Lys241 each participate in a glycyl lysine isopeptide (Lys-Gly) (interchain with G-Cter in ubiquitin) cross-link. Ser265 carries the post-translational modification Phosphoserine; by MAPK. Ser270 lines the FAD pocket. Ser298 carries the post-translational modification Phosphoserine. Gln307 lines the FAD pocket. Lys347 participates in a covalent cross-link: Glycyl lysine isopeptide (Lys-Gly) (interchain with G-Cter in ubiquitin). FAD-binding positions include His373 and 405–407 (DAD). The tract at residues 389-488 (WVSWESGVRV…IIGVDYPRPI (100 aa)) is required for inhibition of CLOCK-BMAL1-mediated transcription. Residues Lys474 and Lys503 each participate in a glycyl lysine isopeptide (Lys-Gly) (interchain with G-Cter in ubiquitin) cross-link. The segment at 532-592 (VAEPGSSQAG…PTQEPASKDS (61 aa)) is disordered. Over residues 536 to 547 (GSSQAGSISNTG) the composition is skewed to polar residues. Ser553 is modified (phosphoserine; by GSK3-beta). At Ser557 the chain carries Phosphoserine; by DYRK1A and MAPK. The segment covering 582-592 (MPTQEPASKDS) has biased composition (polar residues).

The protein belongs to the DNA photolyase class-1 family. As to quaternary structure, component of the circadian core oscillator, which includes the CRY proteins, CLOCK or NPAS2, BMAL1 or BMAL2, CSNK1D and/or CSNK1E, TIMELESS, and the PER proteins. Interacts with TIMELESS. Interacts directly with PER1, PER2 and PER3; interaction with PER2 inhibits its ubiquitination and vice versa. Interacts with CLOCK-BMAL1. Interacts with BMAL1. Interacts with CLOCK. Interacts with NFIL3. Interacts with FBXL3 and FBXL21. FBXL3, PER2 and the cofactor FAD compete for overlapping binding sites. FBXL3 cannot bind CRY2 that interacts already with PER2 or that contains bound FAD. Interacts with PPP5C (via TPR repeats); the interaction down-regulates the PPP5C phosphatase activity on CSNK1E. Interacts with nuclear receptors AR and NR3C1/GR; the interaction is ligand dependent. Interacts with PRKDC. Interacts with CIART. Interacts with DDB1, USP7 and TARDBP. Interacts with HNF4A. Interacts with PPARA. Interacts with PPARG in a ligand-dependent manner. Interacts with PPARD (via domain NR LBD) in a ligand-dependent manner. Interacts with NR1I2 (via domain NR LBD) in a ligand-dependent manner. Interacts with NR1I3 and VDR in a ligand-dependent manner. The cofactor is FAD. It depends on (6R)-5,10-methylene-5,6,7,8-tetrahydrofolate as a cofactor. Post-translationally, phosphorylation on Ser-265 by MAPK is important for the inhibition of CLOCK-BMAL1-mediated transcriptional activity. Phosphorylation by CSKNE requires interaction with PER1 or PER2. Phosphorylated in a circadian manner at Ser-553 and Ser-557 in the suprachiasmatic nucleus (SCN) and liver. Phosphorylation at Ser-557 by DYRK1A promotes subsequent phosphorylation at Ser-553 by GSK3-beta: the two-step phosphorylation at the neighboring Ser residues leads to its proteasomal degradation. Ubiquitinated by the SCF(FBXL3) and SCF(FBXL21) complexes, regulating the balance between degradation and stabilization. The SCF(FBXL3) complex is mainly nuclear and mediates ubiquitination and subsequent degradation of CRY2. In contrast, cytoplasmic SCF(FBXL21) complex-mediated ubiquitination leads to stabilize CRY2 and counteract the activity of the SCF(FBXL3) complex. The SCF(FBXL3) and SCF(FBXL21) complexes probably mediate ubiquitination at different Lys residues. The SCF(FBXL3) complex recognizes and binds CRY2 phosphorylated at Ser-553 and Ser-557. Ubiquitination may be inhibited by PER2. Deubiquitinated by USP7. As to expression, expression in the retina is restricted to the photoreceptor layer (at protein level). Expressed in all tissues examined including heart, brain, spleen, lung, liver, skeletal muscle, kidney and testis. Weak expression in spleen.

The protein localises to the cytoplasm. It localises to the nucleus. KL001 (N-[3-(9H-carbazol-9-yl)-2-hydroxypropyl]-N-(2-furanylmethyl)-methanesulfonamide) binds to CRY1 and stabilizes it by inhibiting FBXL3- and ubiquitin-dependent degradation of CRY1 resulting in lengthening of the circadian periods. KL001-mediated CRY1 stabilization can inhibit glucagon-induced gluconeogenesis in primary hepatocytes. In terms of biological role, transcriptional repressor which forms a core component of the circadian clock. The circadian clock, an internal time-keeping system, regulates various physiological processes through the generation of approximately 24 hour circadian rhythms in gene expression, which are translated into rhythms in metabolism and behavior. It is derived from the Latin roots 'circa' (about) and 'diem' (day) and acts as an important regulator of a wide array of physiological functions including metabolism, sleep, body temperature, blood pressure, endocrine, immune, cardiovascular, and renal function. Consists of two major components: the central clock, residing in the suprachiasmatic nucleus (SCN) of the brain, and the peripheral clocks that are present in nearly every tissue and organ system. Both the central and peripheral clocks can be reset by environmental cues, also known as Zeitgebers (German for 'timegivers'). The predominant Zeitgeber for the central clock is light, which is sensed by retina and signals directly to the SCN. The central clock entrains the peripheral clocks through neuronal and hormonal signals, body temperature and feeding-related cues, aligning all clocks with the external light/dark cycle. Circadian rhythms allow an organism to achieve temporal homeostasis with its environment at the molecular level by regulating gene expression to create a peak of protein expression once every 24 hours to control when a particular physiological process is most active with respect to the solar day. Transcription and translation of core clock components (CLOCK, NPAS2, BMAL1, BMAL2, PER1, PER2, PER3, CRY1 and CRY2) plays a critical role in rhythm generation, whereas delays imposed by post-translational modifications (PTMs) are important for determining the period (tau) of the rhythms (tau refers to the period of a rhythm and is the length, in time, of one complete cycle). A diurnal rhythm is synchronized with the day/night cycle, while the ultradian and infradian rhythms have a period shorter and longer than 24 hours, respectively. Disruptions in the circadian rhythms contribute to the pathology of cardiovascular diseases, cancer, metabolic syndromes and aging. A transcription/translation feedback loop (TTFL) forms the core of the molecular circadian clock mechanism. Transcription factors, CLOCK or NPAS2 and BMAL1 or BMAL2, form the positive limb of the feedback loop, act in the form of a heterodimer and activate the transcription of core clock genes and clock-controlled genes (involved in key metabolic processes), harboring E-box elements (5'-CACGTG-3') within their promoters. The core clock genes: PER1/2/3 and CRY1/2 which are transcriptional repressors form the negative limb of the feedback loop and interact with the CLOCK|NPAS2-BMAL1|BMAL2 heterodimer inhibiting its activity and thereby negatively regulating their own expression. This heterodimer also activates nuclear receptors NR1D1/2 and RORA/B/G, which form a second feedback loop and which activate and repress BMAL1 transcription, respectively. CRY1 and CRY2 have redundant functions but also differential and selective contributions at least in defining the pace of the SCN circadian clock and its circadian transcriptional outputs. Less potent transcriptional repressor in cerebellum and liver than CRY1, though less effective in lengthening the period of the SCN oscillator. Seems to play a critical role in tuning SCN circadian period by opposing the action of CRY1. With CRY1, dispensable for circadian rhythm generation but necessary for the development of intercellular networks for rhythm synchrony. May mediate circadian regulation of cAMP signaling and gluconeogenesis by blocking glucagon-mediated increases in intracellular cAMP concentrations and in CREB1 phosphorylation. Besides its role in the maintenance of the circadian clock, is also involved in the regulation of other processes. Plays a key role in glucose and lipid metabolism modulation, in part, through the transcriptional regulation of genes involved in these pathways, such as LEP or ACSL4. Represses glucocorticoid receptor NR3C1/GR-induced transcriptional activity by binding to glucocorticoid response elements (GREs). Represses the CLOCK-BMAL1 induced transcription of BHLHE40/DEC1 and NAMPT. Represses PPARD and its target genes in the skeletal muscle and limits exercise capacity. Represses the transcriptional activity of NR1I2. The polypeptide is Cryptochrome-2 (Cry2) (Mus musculus (Mouse)).